Here is a 549-residue protein sequence, read N- to C-terminus: Glucose-6-phosphate isomerase 1 (549 aa).

The active-site Proton donor is E358. Catalysis depends on residues H389 and K513.

It belongs to the GPI family.

It is found in the cytoplasm. It carries out the reaction alpha-D-glucose 6-phosphate = beta-D-fructose 6-phosphate. It functions in the pathway carbohydrate biosynthesis; gluconeogenesis. Its pathway is carbohydrate degradation; glycolysis; D-glyceraldehyde 3-phosphate and glycerone phosphate from D-glucose: step 2/4. Catalyzes the reversible isomerization of glucose-6-phosphate to fructose-6-phosphate. This is Glucose-6-phosphate isomerase 1 from Streptomyces avermitilis (strain ATCC 31267 / DSM 46492 / JCM 5070 / NBRC 14893 / NCIMB 12804 / NRRL 8165 / MA-4680).